The following is a 659-amino-acid chain: Siderophore transporter fer7 (659 aa).

Positions 1-62 (MSNQAQDQPE…ADASSAREGQ (62 aa)) are disordered. Residues 31–41 (QSVSAHGNTSL) are compositionally biased toward polar residues. A glycan (N-linked (GlcNAc...) asparagine) is linked at Asn38. Residues 42 to 54 (NKKDRVSAVRDAD) show a composition bias toward basic and acidic residues. 8 helical membrane-spanning segments follow: residues 79–99 (NSPIVYTVYASLAAVTICFAL), 121–141 (LFGVIATVEAILNAVSKPFIA), 150–170 (QTAYFLVAVFYTIGFVVVASA), 208–228 (GVVTALTSSPFIVLPWVGNLI), 245–265 (GMFAIMAPVCVAPIILVLMYV), 316–336 (LVGLFLLALSFSLLLVPFSIY), 348–368 (IIAMFVCGGVILGMFLAWEIL), and 379–399 (VWYNRTFLLAVTIDIFYFMGG). A glycan (N-linked (GlcNAc...) asparagine) is linked at Asn415. The next 2 membrane-spanning stretches (helical) occupy residues 424–444 (VVNALATCALSVFGLAAGFYL) and 451–471 (KFLQIGGLVIRIVAMGLYLYG). Asn475 carries N-linked (GlcNAc...) asparagine glycosylation. Transmembrane regions (helical) follow at residues 478 to 498 (TMVVAWSQILNSLGGACSVVG), 528 to 548 (AIGSAIAAGIWTGTLPDYLAA), and 590 to 610 (PIFIVALVLAFIPLFAGLLMP).

Belongs to the major facilitator superfamily.

It localises to the membrane. In terms of biological role, siderophore transporter; part of the gene cluster that mediates the biosynthesis of siderophore ferrichrome A which is contributing to organismal virulence. This is Siderophore transporter fer7 from Mycosarcoma maydis (Corn smut fungus).